The sequence spans 89 residues: Pigment dispersing factor homolog pdf-2 (89 aa).

An N-terminal signal peptide occupies residues 1–27; the sequence is MSSRISVSLLLLAVVATMFFTANVVDA.

Probable ligand of isoforms a and b of the calcitonin receptor-like protein, pdfr-1, a G-protein coupled receptor. May not signal through isoform c of pdfr-1. Involved in locomotion; may play a role in circadian rhythms of locomotor activity. Modulator of egg-laying. The polypeptide is Pigment dispersing factor homolog pdf-2 (Caenorhabditis elegans).